Reading from the N-terminus, the 429-residue chain is Glutamate-1-semialdehyde 2,1-aminomutase (429 aa).

At K270 the chain carries N6-(pyridoxal phosphate)lysine.

Belongs to the class-III pyridoxal-phosphate-dependent aminotransferase family. HemL subfamily. Homodimer. The cofactor is pyridoxal 5'-phosphate.

It localises to the cytoplasm. It carries out the reaction (S)-4-amino-5-oxopentanoate = 5-aminolevulinate. It participates in porphyrin-containing compound metabolism; protoporphyrin-IX biosynthesis; 5-aminolevulinate from L-glutamyl-tRNA(Glu): step 2/2. The chain is Glutamate-1-semialdehyde 2,1-aminomutase from Cupriavidus pinatubonensis (strain JMP 134 / LMG 1197) (Cupriavidus necator (strain JMP 134)).